A 204-amino-acid polypeptide reads, in one-letter code: Small ribosomal subunit protein uS4 (204 aa).

The interval Ser-25–Tyr-47 is disordered. One can recognise an S4 RNA-binding domain in the interval Arg-93 to Ala-156.

It belongs to the universal ribosomal protein uS4 family. In terms of assembly, part of the 30S ribosomal subunit. Contacts protein S5. The interaction surface between S4 and S5 is involved in control of translational fidelity.

Functionally, one of the primary rRNA binding proteins, it binds directly to 16S rRNA where it nucleates assembly of the body of the 30S subunit. In terms of biological role, with S5 and S12 plays an important role in translational accuracy. The chain is Small ribosomal subunit protein uS4 from Rhodospirillum centenum (strain ATCC 51521 / SW).